The sequence spans 266 residues: Large ribosomal subunit protein eL8 (266 aa).

The span at 104–130 (PETKQEKKQRLLARAEQKAAGKGDTPT) shows a compositional bias: basic and acidic residues. The segment at 104-135 (PETKQEKKQRLLARAEQKAAGKGDTPTKRPPV) is disordered.

The protein belongs to the eukaryotic ribosomal protein eL8 family. Component of the large ribosomal subunit.

Its subcellular location is the cytoplasm. In terms of biological role, component of the large ribosomal subunit. The ribosome is a large ribonucleoprotein complex responsible for the synthesis of proteins in the cell. The protein is Large ribosomal subunit protein eL8 (RPL7A) of Gallus gallus (Chicken).